The chain runs to 195 residues: Ras-related protein rac-2 (195 aa).

A GTP-binding site is contributed by 10–17 (GDGAVGKT). Residues 32–40 (YILTVFDTY) carry the Effector region motif. Residues 57–61 (DTAGQ) and 115–118 (TKAD) contribute to the GTP site. The tract at residues 176–195 (GLTPPQTPQTRAKKSNCTVL) is disordered. Residue Cys192 is modified to Cysteine methyl ester. The S-geranylgeranyl cysteine moiety is linked to residue Cys192. A propeptide spans 193-195 (TVL) (removed in mature form).

It belongs to the small GTPase superfamily. Rho family.

Its subcellular location is the cell membrane. During gonad morphogenesis, plays a role in distal tip cell (DTC)-mediated guidance of gonad elongation. The protein is Ras-related protein rac-2 (rac-2) of Caenorhabditis elegans.